Here is a 159-residue protein sequence, read N- to C-terminus: Na(+)/H(+) antiporter subunit E1 (159 aa).

The next 4 membrane-spanning stretches (helical) occupy residues 1 to 21 (MAVQ…VTNS), 27 to 47 (FVLG…VLPG), 49 to 69 (FYVI…IELI), and 101 to 121 (WQIV…VLGV).

It belongs to the CPA3 antiporters (TC 2.A.63) subunit E family. In terms of assembly, may form a heterooligomeric complex that consists of seven subunits: mnhA1, mnhB1, mnhC1, mnhD1, mnhE1, mnhF1 and mnhG1.

It is found in the cell membrane. Mnh complex is a Na(+)/H(+) antiporter involved in Na(+) excretion. This chain is Na(+)/H(+) antiporter subunit E1 (mnhE1), found in Staphylococcus aureus (strain bovine RF122 / ET3-1).